A 418-amino-acid polypeptide reads, in one-letter code: MSGTVVAVPPRVARALDLLNFSLADVRDGLGPYLSIYLLLIHDWDQASIGFVMAVGGIAAIVAQTPIGALVDRTTAKRALVVAGAVLVTAAAVAMPLFAGLYSISVLQAVTGIASSVFAPALAAITLGAVGPQFFARRIGRNEAFNHAGNASAAGATGALAYFFGPVVVFWVLAGMALISVLATLRIPPDAVDHDLARGMDHAPGEPHPQPSRFTVLAHNRELVIFGAAVVAFHFANAAMLPLVGELLALHNRDEGTALMSSCIVAAQVVMVPVAYVVGTRADAWGRKPIFLVGFAVLTARGFLYTLSDNSYWLVGVQLLDGIGAGIFGALFPLVVQDVTHGTGHFNISLGAVTTATGIGAALSNLVAGWIVVVAGYDAAFMSLGALAGAGFLLYLVAMPETVDSDVRVRSRPTLGGK.

10 consecutive transmembrane segments (helical) span residues 51 to 71, 79 to 99, 110 to 130, 163 to 183, 224 to 244, 258 to 278, 289 to 309, 315 to 335, 356 to 376, and 379 to 399; these read FVMAVGGIAAIVAQTPIGALV, ALVVAGAVLVTAAAVAMPLFA, VTGIASSVFAPALAAITLGAV, FFGPVVVFWVLAGMALISVLA, VIFGAAVVAFHFANAAMLPLV, ALMSSCIVAAQVVMVPVAYVV, PIFLVGFAVLTARGFLYTLSD, VGVQLLDGIGAGIFGALFPLV, ATGIGAALSNLVAGWIVVVAG, and AAFMSLGALAGAGFLLYLVAM.

The protein belongs to the major facilitator superfamily.

The protein localises to the cell membrane. This is an uncharacterized protein from Mycobacterium tuberculosis (strain CDC 1551 / Oshkosh).